Consider the following 154-residue polypeptide: Probable transcription factor At4g00232 (154 aa).

Residues 1-44 (MDKANTNRSKVCGGSGEAKLTGKKRKNVSAKQSKKDAKKENSQM) form a disordered region.

It belongs to the GeBP family.

The sequence is that of Probable transcription factor At4g00232 from Arabidopsis thaliana (Mouse-ear cress).